The following is a 326-amino-acid chain: NADH-quinone oxidoreductase subunit H (326 aa).

The next 8 helical transmembrane spans lie at Ile11–Phe31, Val81–Val101, Ile114–Gly134, Leu154–Phe174, Leu186–Val206, Phe237–Phe257, Leu265–Ile285, and Trp302–Trp322.

It belongs to the complex I subunit 1 family. As to quaternary structure, NDH-1 is composed of 13 different subunits. Subunits NuoA, H, J, K, L, M, N constitute the membrane sector of the complex.

The protein resides in the cell inner membrane. It catalyses the reaction a quinone + NADH + 5 H(+)(in) = a quinol + NAD(+) + 4 H(+)(out). Functionally, NDH-1 shuttles electrons from NADH, via FMN and iron-sulfur (Fe-S) centers, to quinones in the respiratory chain. The immediate electron acceptor for the enzyme in this species is believed to be ubiquinone. Couples the redox reaction to proton translocation (for every two electrons transferred, four hydrogen ions are translocated across the cytoplasmic membrane), and thus conserves the redox energy in a proton gradient. This subunit may bind ubiquinone. This chain is NADH-quinone oxidoreductase subunit H, found in Cronobacter sakazakii (strain ATCC BAA-894) (Enterobacter sakazakii).